Reading from the N-terminus, the 137-residue chain is 1,4-dihydroxy-2-naphthoyl-CoA hydrolase (137 aa).

Aspartate 12 is a catalytic residue.

The protein belongs to the 4-hydroxybenzoyl-CoA thioesterase family. DHNA-CoA hydrolase subfamily.

It carries out the reaction 1,4-dihydroxy-2-naphthoyl-CoA + H2O = 1,4-dihydroxy-2-naphthoate + CoA + H(+). It functions in the pathway cofactor biosynthesis; phylloquinone biosynthesis. It participates in quinol/quinone metabolism; 1,4-dihydroxy-2-naphthoate biosynthesis; 1,4-dihydroxy-2-naphthoate from chorismate: step 7/7. Its function is as follows. Catalyzes the hydrolysis of 1,4-dihydroxy-2-naphthoyl-CoA (DHNA-CoA) to 1,4-dihydroxy-2-naphthoate (DHNA), a reaction involved in phylloquinone (vitamin K1) biosynthesis. The sequence is that of 1,4-dihydroxy-2-naphthoyl-CoA hydrolase from Acaryochloris marina (strain MBIC 11017).